The following is a 423-amino-acid chain: Sorting nexin-4 (423 aa).

The segment covering 1-21 (MTDKGKNDLTSKAKDKARGNP) has biased composition (basic and acidic residues). The tract at residues 1–25 (MTDKGKNDLTSKAKDKARGNPEKPP) is disordered. The region spanning 29 to 157 (EIIVSDPQKR…TFLVSKDWES (129 aa)) is the PX domain. A 1,2-diacyl-sn-glycero-3-phospho-(1D-myo-inositol-3-phosphate) is bound by residues Arg-78, Ser-80, Lys-104, and Arg-123. 2 coiled-coil regions span residues 217–252 (KKNDSMSEDYTKLGSNLQELQELVTGENEELAAKLK) and 346–381 (SRREKINKLEGKITSLTGELENAKKVADGFEQECLK).

Belongs to the sorting nexin family. In terms of assembly, forms a complex with ATG20 and ATG17. Binds also to SNC1 and SNX41.

The protein resides in the cytoplasm. The protein localises to the cytosol. It is found in the preautophagosomal structure membrane. It localises to the endosome membrane. In terms of biological role, sorting nexin, involved in the separation or division of vacuoles throughout the entire life cycle of the cells. Involved in retrieval of late-Golgi SNAREs from post-Golgi endosomes to the trans-Golgi network, for cytoplasm to vacuole transport (Cvt), and autophagy of large cargos including mitophagy, pexophagy and glycophagy. Involved in proper sorting of the v-SNARE protein SNC1. The protein is Sorting nexin-4 of Saccharomyces cerevisiae (strain ATCC 204508 / S288c) (Baker's yeast).